The chain runs to 204 residues: Large ribosomal subunit protein uL4 (204 aa).

Positions 49–72 (QKNRAAVSGGGKKPWRQKGTGRAR) are disordered.

It belongs to the universal ribosomal protein uL4 family. As to quaternary structure, part of the 50S ribosomal subunit.

Its function is as follows. One of the primary rRNA binding proteins, this protein initially binds near the 5'-end of the 23S rRNA. It is important during the early stages of 50S assembly. It makes multiple contacts with different domains of the 23S rRNA in the assembled 50S subunit and ribosome. Forms part of the polypeptide exit tunnel. The polypeptide is Large ribosomal subunit protein uL4 (Saccharophagus degradans (strain 2-40 / ATCC 43961 / DSM 17024)).